A 459-amino-acid polypeptide reads, in one-letter code: Argininosuccinate lyase (459 aa).

Belongs to the lyase 1 family. Argininosuccinate lyase subfamily.

Its subcellular location is the cytoplasm. The enzyme catalyses 2-(N(omega)-L-arginino)succinate = fumarate + L-arginine. The protein operates within amino-acid biosynthesis; L-arginine biosynthesis; L-arginine from L-ornithine and carbamoyl phosphate: step 3/3. The polypeptide is Argininosuccinate lyase (Geobacillus kaustophilus (strain HTA426)).